The primary structure comprises 342 residues: tRNA N6-adenosine threonylcarbamoyltransferase (342 aa).

The Fe cation site is built by His115 and His119. Residues 137–141, Asp170, Gly183, Asp187, and Asn276 contribute to the substrate site; that span reads IVSGG. Residue Asp304 participates in Fe cation binding.

Belongs to the KAE1 / TsaD family. Fe(2+) serves as cofactor.

The protein resides in the cytoplasm. It catalyses the reaction L-threonylcarbamoyladenylate + adenosine(37) in tRNA = N(6)-L-threonylcarbamoyladenosine(37) in tRNA + AMP + H(+). Its function is as follows. Required for the formation of a threonylcarbamoyl group on adenosine at position 37 (t(6)A37) in tRNAs that read codons beginning with adenine. Is involved in the transfer of the threonylcarbamoyl moiety of threonylcarbamoyl-AMP (TC-AMP) to the N6 group of A37, together with TsaE and TsaB. TsaD likely plays a direct catalytic role in this reaction. The protein is tRNA N6-adenosine threonylcarbamoyltransferase of Staphylococcus saprophyticus subsp. saprophyticus (strain ATCC 15305 / DSM 20229 / NCIMB 8711 / NCTC 7292 / S-41).